We begin with the raw amino-acid sequence, 136 residues long: Nucleoside diphosphate kinase (136 aa).

Lysine 10, phenylalanine 58, arginine 86, threonine 92, arginine 104, and asparagine 114 together coordinate ATP. Histidine 117 functions as the Pros-phosphohistidine intermediate in the catalytic mechanism.

Belongs to the NDK family. Homotetramer. It depends on Mg(2+) as a cofactor.

Its subcellular location is the cytoplasm. The catalysed reaction is a 2'-deoxyribonucleoside 5'-diphosphate + ATP = a 2'-deoxyribonucleoside 5'-triphosphate + ADP. The enzyme catalyses a ribonucleoside 5'-diphosphate + ATP = a ribonucleoside 5'-triphosphate + ADP. Its function is as follows. Major role in the synthesis of nucleoside triphosphates other than ATP. The ATP gamma phosphate is transferred to the NDP beta phosphate via a ping-pong mechanism, using a phosphorylated active-site intermediate. The polypeptide is Nucleoside diphosphate kinase (Corynebacterium diphtheriae (strain ATCC 700971 / NCTC 13129 / Biotype gravis)).